Reading from the N-terminus, the 178-residue chain is Transcription factor E (178 aa).

An HTH TFE/IIEalpha-type domain is found at Ala5–Asn89.

It belongs to the TFE family. In terms of assembly, monomer. Interaction with RNA polymerase subunits RpoF and RpoE is necessary for Tfe stimulatory transcription activity. Able to interact with Tbp and RNA polymerase in the absence of DNA promoter. Interacts both with the preinitiation and elongation complexes.

In terms of biological role, transcription factor that plays a role in the activation of archaeal genes transcribed by RNA polymerase. Facilitates transcription initiation by enhancing TATA-box recognition by TATA-box-binding protein (Tbp), and transcription factor B (Tfb) and RNA polymerase recruitment. Not absolutely required for transcription in vitro, but particularly important in cases where Tbp or Tfb function is not optimal. It dynamically alters the nucleic acid-binding properties of RNA polymerases by stabilizing the initiation complex and destabilizing elongation complexes. Seems to translocate with the RNA polymerase following initiation and acts by binding to the non template strand of the transcription bubble in elongation complexes. The protein is Transcription factor E of Sulfurisphaera tokodaii (strain DSM 16993 / JCM 10545 / NBRC 100140 / 7) (Sulfolobus tokodaii).